The chain runs to 448 residues: DNA primase DnaG (448 aa).

Residues 186–260 (DSIIVVEGRN…EADFVARAPP (75 aa)) enclose the Toprim domain. Mg(2+)-binding residues include E192, D234, and D236. The tract at residues 318–340 (AEVIEEPPEQPPKNEEIREEQSQ) is disordered. The segment covering 329 to 338 (PKNEEIREEQ) has biased composition (basic and acidic residues).

This sequence belongs to the archaeal DnaG primase family. In terms of assembly, forms a ternary complex with MCM helicase and DNA. Component of the archaeal exosome complex. It depends on Mg(2+) as a cofactor.

It carries out the reaction ssDNA + n NTP = ssDNA/pppN(pN)n-1 hybrid + (n-1) diphosphate.. Functionally, RNA polymerase that catalyzes the synthesis of short RNA molecules used as primers for DNA polymerase during DNA replication. Also part of the exosome, which is a complex involved in RNA degradation. Acts as a poly(A)-binding protein that enhances the interaction between heteromeric, adenine-rich transcripts and the exosome. The sequence is that of DNA primase DnaG from Thermoplasma acidophilum (strain ATCC 25905 / DSM 1728 / JCM 9062 / NBRC 15155 / AMRC-C165).